A 92-amino-acid chain; its full sequence is Protein S100-A12 (92 aa).

2 consecutive EF-hand domains span residues 13 to 48 and 49 to 84; these read NIFHQYSVRKGHFDTLSKGELKQLLTKELANTIKNI and KDKAVIDEIFQGLDANQDEQVDFQEFISLVAIALKA. Histidine 16 lines the Cu cation pocket. Residue histidine 16 participates in Zn(2+) binding. Ca(2+)-binding residues include serine 19, lysine 22, and histidine 24. Aspartate 26 is a binding site for Cu cation. Aspartate 26 is a Zn(2+) binding site. Residues threonine 27 and glutamate 32 each coordinate Ca(2+). A hinge domain region spans residues 38-53; sequence TKELANTIKNIKDKAV. 5 residues coordinate Ca(2+): aspartate 62, asparagine 64, aspartate 66, glutamine 68, and glutamate 73. Cu cation-binding residues include histidine 86 and histidine 90. Residues histidine 86 and histidine 90 each contribute to the Zn(2+) site.

This sequence belongs to the S-100 family. In terms of assembly, homodimer. Homooligomer (tetramer or hexamer) in the presence of calcium, zinc and copper ions. Interacts with AGER and both calcium and zinc are essential for the interaction. Interacts with CACYBP in a calcium-dependent manner. As to expression, predominantly expressed by neutrophils, monocytes and activated macrophages. Expressed by eosinophils and macrophages in asthmatic airways in regions where mast cells accumulate. Found in high concentrations in the serum of patients suffering from various inflammatory disorders, such as rheumatoid arthritis, psoriatic arthritis, Crohn's disease, ulcerative colitis, and Kawasaki disease.

It localises to the secreted. It is found in the cytoplasm. Its subcellular location is the cytoskeleton. The protein resides in the cell membrane. Its function is as follows. S100A12 is a calcium-, zinc- and copper-binding protein which plays a prominent role in the regulation of inflammatory processes and immune response. Its pro-inflammatory activity involves recruitment of leukocytes, promotion of cytokine and chemokine production, and regulation of leukocyte adhesion and migration. Acts as an alarmin or a danger associated molecular pattern (DAMP) molecule and stimulates innate immune cells via binding to receptor for advanced glycation endproducts (AGER). Binding to AGER activates the MAP-kinase and NF-kappa-B signaling pathways leading to production of pro-inflammatory cytokines and up-regulation of cell adhesion molecules ICAM1 and VCAM1. Acts as a monocyte and mast cell chemoattractant. Can stimulate mast cell degranulation and activation which generates chemokines, histamine and cytokines inducing further leukocyte recruitment to the sites of inflammation. Can inhibit the activity of matrix metalloproteinases; MMP2, MMP3 and MMP9 by chelating Zn(2+) from their active sites. Possesses filariacidal and filariastatic activity. Calcitermin possesses antifungal activity against C.albicans and is also active against E.coli and P.aeruginosa but not L.monocytogenes and S.aureus. This Homo sapiens (Human) protein is Protein S100-A12 (S100A12).